Reading from the N-terminus, the 78-residue chain is Large ribosomal subunit protein bL28 (78 aa).

It belongs to the bacterial ribosomal protein bL28 family.

This Pectobacterium atrosepticum (strain SCRI 1043 / ATCC BAA-672) (Erwinia carotovora subsp. atroseptica) protein is Large ribosomal subunit protein bL28.